A 190-amino-acid polypeptide reads, in one-letter code: Vexin (190 aa).

Residues 88–156 form a disordered region; sequence AEKKASRFSR…DEATLPLTAH (69 aa). Residues 117-133 are compositionally biased toward polar residues; it reads TDKQNAPTVPASPSSYE. Positions 136–149 are enriched in basic and acidic residues; it reads GCREQRPENPKDEA.

The protein belongs to the vexin family. In terms of tissue distribution, expressed in differentiating progenitors in the developing central nervous system (CNS).

The protein localises to the cell membrane. It is found in the nucleus. Functionally, required for neurogenesis in the neural plate and retina. Cooperates with cell cycle inhibitor cdknx/p27(xic1) to enhance neurogenesis and increase the levels of the neuronal determination factor neurog2/X-ngngr-1. This is Vexin from Xenopus laevis (African clawed frog).